Here is a 265-residue protein sequence, read N- to C-terminus: MIRARKRFGQHWLRSEAILAQIIAAAELHPGDRVLEIGPGRGALTRPLLVSGAEVVAVELDRDLCGQLRRQFDSERFQLIEGDILRLDLAPLGCNKVVANIPYNITGPLLGHLLGSIARPRRPAFERLILLVQKEIGDRLMASPGSKAYGALSVRVQFLATCEKVCAVPPRAFQPPPKVDSVVVCLRPHRTLPRVGSPQWLETLLKQGFATRRKMLANALKSLVEPEQVRQALLQLGRDANSRAEALSLEDWLALSEVLRQLQQN.

Residues His-11, Leu-13, Gly-38, Glu-59, Asp-83, and Asn-100 each contribute to the S-adenosyl-L-methionine site.

Belongs to the class I-like SAM-binding methyltransferase superfamily. rRNA adenine N(6)-methyltransferase family. RsmA subfamily.

Its subcellular location is the cytoplasm. It carries out the reaction adenosine(1518)/adenosine(1519) in 16S rRNA + 4 S-adenosyl-L-methionine = N(6)-dimethyladenosine(1518)/N(6)-dimethyladenosine(1519) in 16S rRNA + 4 S-adenosyl-L-homocysteine + 4 H(+). Specifically dimethylates two adjacent adenosines (A1518 and A1519) in the loop of a conserved hairpin near the 3'-end of 16S rRNA in the 30S particle. May play a critical role in biogenesis of 30S subunits. The polypeptide is Ribosomal RNA small subunit methyltransferase A (Thermosynechococcus vestitus (strain NIES-2133 / IAM M-273 / BP-1)).